Consider the following 157-residue polypeptide: 2-C-methyl-D-erythritol 2,4-cyclodiphosphate synthase (157 aa).

Positions 8 and 10 each coordinate a divalent metal cation. 4-CDP-2-C-methyl-D-erythritol 2-phosphate contacts are provided by residues 8–10 (DVH) and 34–35 (HS). Histidine 42 contributes to the a divalent metal cation binding site. 4-CDP-2-C-methyl-D-erythritol 2-phosphate is bound by residues 56–58 (DIG), 61–65 (FPDTD), 100–106 (AQAPKMA), 132–135 (TTTE), phenylalanine 139, and arginine 142.

This sequence belongs to the IspF family. In terms of assembly, homotrimer. It depends on a divalent metal cation as a cofactor.

The catalysed reaction is 4-CDP-2-C-methyl-D-erythritol 2-phosphate = 2-C-methyl-D-erythritol 2,4-cyclic diphosphate + CMP. Its pathway is isoprenoid biosynthesis; isopentenyl diphosphate biosynthesis via DXP pathway; isopentenyl diphosphate from 1-deoxy-D-xylulose 5-phosphate: step 4/6. Its function is as follows. Involved in the biosynthesis of isopentenyl diphosphate (IPP) and dimethylallyl diphosphate (DMAPP), two major building blocks of isoprenoid compounds. Catalyzes the conversion of 4-diphosphocytidyl-2-C-methyl-D-erythritol 2-phosphate (CDP-ME2P) to 2-C-methyl-D-erythritol 2,4-cyclodiphosphate (ME-CPP) with a corresponding release of cytidine 5-monophosphate (CMP). This Pseudomonas putida (strain GB-1) protein is 2-C-methyl-D-erythritol 2,4-cyclodiphosphate synthase.